A 59-amino-acid chain; its full sequence is Small ribosomal subunit protein bS21 (59 aa).

The tract at residues 40-59 (KPSIKKRAKSKAALKYKKQR) is disordered.

This sequence belongs to the bacterial ribosomal protein bS21 family.

The sequence is that of Small ribosomal subunit protein bS21 from Protochlamydia amoebophila (strain UWE25).